A 346-amino-acid polypeptide reads, in one-letter code: T-box protein 12 (346 aa).

Over residues 33–48 the composition is skewed to acidic residues; the sequence is DEEDVEVDVEDVDDVD. Residues 33–66 form a disordered region; it reads DEEDVEVDVEDVDDVDLSSIPSKSPERSRGRPKI. Positions 86 to 268 form a DNA-binding region, T-box; it reads LWAKFFDLGT…KNPFAKGFRD (183 aa).

Its subcellular location is the nucleus. In terms of biological role, transcription factor. Involved in cell fate determination; required to pattern the posterior hindgut. Involved in motor neuron fate determination and maintenance, acting as a transcriptional repressor to counteract gene activation by transcription factor unc-3 in a subset of motor neurons. Required throughout development to repress transcription by unc-3, probably acting by binding to specific promoter elements. Represses expression of VA and VB motor neuron-specific effector genes, such as DEG/ENaC channel del-1 and the innexin inx-12, in DA and DB motor neurons. Represses expression of transcription factor bnc-1, perhaps acting directly, in DA and DB motor neurons. The polypeptide is T-box protein 12 (mab-9) (Caenorhabditis elegans).